The sequence spans 990 residues: MAEDTEMPDAEAVRENTLMYGHDDELDEKFPTRPMNLHKSPPFHTLFTDLFDPLMETQKKGRQPPGPRRKAGPHGHSNLSPHEAKRNIIERFIASWRKTVGNDFYPAMRLIIPDKDRDRAMYGLKEKAIAKVLIKLTKISKDSDDAKQMLNWKLPGQLHKASASTAGDFAGRCYQVLSSRQLNTKLGDMSIAEVNNALDKLSQLGSEDEQVKIFQRFNRRMNAEEMTWLIRIILRQMKIGATEKTFLDIWHPDAETLFNISSNLRRVCWELYDPKVRLEGEDTGLSLMQCFQPQLAAFQDKGGSFEKIVARLQANSDDDSFWIEEKLDGERMQLHMIEDPEAPGGKLFGFWSRKAKDYAYLYGKHLQGDEAGALTRFITDAFGKNVRNIILDGEMITWDMDVDHIVGFGTLKTAAISEKENKTDKSTGQRPLFRVFDCVYLNDKLLTPYTLRDRRRALESAVKDVKRRLEIHPYIEAHSHTEIEPALRKVVAESSEGLVLKNPRSMYRLNDRNADWMKVKPEYMSEFGESLDCIVVGGYFGSGHRGGAHSSFLCALLLNKDAKPGDADYEKCWSFFKVGGGFSREDYAAIRGRTEGKWKDWDPRRPPPIIELGGHEQNRQHERPDQWIHPSDSVVLECKAASVEGSDKFRFNLTLRFPRFRMLRTDKRWDQALSREEFYEIKANVEYKREEKEKEFEIEKSRRKRTRTTKKPIVVAGSETITTPYAGPQSKIFDGLSFYIMTEQLHPTKKSKVDLEALVKANGGRVVQRDSMEPNLVIVADKRLIKVASLEKRDTNNIVKPVWIQDTIQQNEVDNGALPYLLPFEPNRHMFYLLGDNQLDYEANADDYGDSYARDIADVEEMRKILGATDPPQKRTKFDRESFLDQLEDHGDSLSHLKTYMFSSTKVAFRTSDDPVWTLRAQLAGNYIRFGGGQITEDEDEEGVTHTVVPDGQTASVSRVADLSRVVGVGWVQKCWDESTRLDEERYQWG.

Residues 57–84 form a disordered region; it reads TQKKGRQPPGPRRKAGPHGHSNLSPHEA. The ATP site is built by glutamate 324, lysine 326, leucine 327, arginine 331, glutamate 394, phenylalanine 436, glutamate 496, lysine 501, lysine 518, and lysine 520. The N6-AMP-lysine intermediate role is filled by lysine 326. Mg(2+) is bound at residue glutamate 394. Glutamate 496 is a Mg(2+) binding site. 2 consecutive BRCT domains span residues 728–821 and 900–989; these read PQSK…LPYL and YMFS…RYQW.

The protein belongs to the ATP-dependent DNA ligase family. Requires Mg(2+) as cofactor.

It localises to the nucleus. It catalyses the reaction ATP + (deoxyribonucleotide)n-3'-hydroxyl + 5'-phospho-(deoxyribonucleotide)m = (deoxyribonucleotide)n+m + AMP + diphosphate.. Functionally, DNA ligase involved in DNA non-homologous end joining (NHEJ); required for double-strand break (DSB) repair. The sequence is that of DNA ligase 4 (LIG4) from Phaeosphaeria nodorum (strain SN15 / ATCC MYA-4574 / FGSC 10173) (Glume blotch fungus).